We begin with the raw amino-acid sequence, 271 residues long: D-methionine-binding lipoprotein MetQ (271 aa).

Positions 1–22 (MAFKFKTFAAVGALIGSLALVG) are cleaved as a signal peptide. The N-palmitoyl cysteine moiety is linked to residue C23. C23 carries S-diacylglycerol cysteine lipidation.

It belongs to the NlpA lipoprotein family.

It localises to the cell membrane. This protein is a component of a D-methionine permease, a binding protein-dependent, ATP-driven transport system. This is D-methionine-binding lipoprotein MetQ (metQ) from Escherichia coli (strain K12).